The sequence spans 300 residues: NAD kinase (300 aa).

Asp-75 (proton acceptor) is an active-site residue. Residues 75 to 76, 149 to 150, Arg-177, Asp-179, 190 to 195, Ala-214, and Gln-248 each bind NAD(+); these read DG, ND, and TAYALS.

It belongs to the NAD kinase family. It depends on a divalent metal cation as a cofactor.

The protein resides in the cytoplasm. It catalyses the reaction NAD(+) + ATP = ADP + NADP(+) + H(+). Involved in the regulation of the intracellular balance of NAD and NADP, and is a key enzyme in the biosynthesis of NADP. Catalyzes specifically the phosphorylation on 2'-hydroxyl of the adenosine moiety of NAD to yield NADP. The polypeptide is NAD kinase (Paraburkholderia phytofirmans (strain DSM 17436 / LMG 22146 / PsJN) (Burkholderia phytofirmans)).